The primary structure comprises 393 residues: MPKKKPTPIQLNPAPDGSAVNGTSSAETNLEALQKKLEELELDEQQRKRLEAFLTQKQKVGELKDDDFEKISELGAGNGGVVFKVSHKPSGLVMARKLIHLEIKPAIRNQIIRELQVLHECNSPYIVGFYGAFYSDGEISICMEHMDGGSLDQVLKKAGRIPEQILGKVSIAVIKGLTYLREKHKIMHRDVKPSNILVNSRGEIKLCDFGVSGQLIDSMANSFVGTRSYMSPERLQGTHYSVQSDIWSMGLSLVEMAVGRYPIPPPDAKELELMFGCQVEGDAAETPPRPRTPGRPLSSYGMDSRPPMAIFELLDYIVNEPPPKLPSAVFSLEFQDFVNKCLIKNPAERADLKQLMVHAFIKRSDAEEVDFAGWLCSTIGLNQPSTPTHAAGV.

The tract at residues 1-27 (MPKKKPTPIQLNPAPDGSAVNGTSSAE) is disordered. A Protein kinase domain is found at 68-361 (FEKISELGAG…LKQLMVHAFI (294 aa)). ATP-binding positions include 74–82 (LGAGNGGVV) and K97. Catalysis depends on D190, which acts as the Proton acceptor. Phosphoserine; by RAF is present on residues S218 and S222. An RAF1-binding region spans residues 270-307 (ELELMFGCQVEGDAAETPPRPRTPGRPLSSYGMDSRPP). Residue T286 is modified to Phosphothreonine. A Phosphothreonine; by MAPK1 modification is found at T292. Position 298 is a phosphoserine; by PAK (S298).

Belongs to the protein kinase superfamily. STE Ser/Thr protein kinase family. MAP kinase kinase subfamily. As to quaternary structure, found in a complex with at least BRAF, HRAS, MAP2K1, MAPK3/ERK1 and RGS14. Forms a heterodimer with MAP2K2/MEK2. Forms heterodimers with KSR2 which further dimerize to form tetramers. Interacts with KSR1 or KSR2 and BRAF; the interaction with KSR1 or KSR2 mediates KSR1-BRAF or KSR2-BRAF dimerization. Interacts with ARBB2, LAMTOR3, MAPK1/ERK2 and RAF1. Interacts with MAPK1/ERK2. Interacts with MORG1. Interacts with PPARG. Interacts with SGK1. Interacts with BIRC6/bruce. Interacts with KAT7; the interaction promotes KAT7 phosphorylation. Interacts with RAF1 and NEK10; the interaction is required for ERK1/2-signaling pathway activation in response to UV irradiation. Interacts with TRAF3IP3. Interacts with MOS. Phosphorylation at Ser-218 and Ser-222 by MAP kinase kinase kinases (RAF or MEKK1) positively regulates the kinase activity. Also phosphorylated at Thr-292 by MAPK1/ERK2 and at Ser-298 by PAK. MAPK1/ERK2 phosphorylation of Thr-292 occurs in response to cellular adhesion and leads to inhibition of Ser-298 phosphorylation by PAK. Autophosphorylated at Ser-218 and Ser-222, autophosphosphorylation is promoted by NEK10 following UV irradiation.

It localises to the cytoplasm. Its subcellular location is the cytoskeleton. It is found in the microtubule organizing center. The protein resides in the centrosome. The protein localises to the spindle pole body. It localises to the nucleus. Its subcellular location is the membrane. It catalyses the reaction L-seryl-[protein] + ATP = O-phospho-L-seryl-[protein] + ADP + H(+). It carries out the reaction L-threonyl-[protein] + ATP = O-phospho-L-threonyl-[protein] + ADP + H(+). The catalysed reaction is L-tyrosyl-[protein] + ATP = O-phospho-L-tyrosyl-[protein] + ADP + H(+). With respect to regulation, ras proteins such as HRAS mediate the activation of RAF proteins such as RAF1 or BRAF which in turn activate extracellular signal-regulated kinases (ERK) through MAPK (mitogen-activated protein kinases) and ERK kinases MAP2K1/MEK1 and MAP2K2/MEK2. Activation occurs through phosphorylation of Ser-218 and Ser-222. MAP2K1/MEK1 binds KSR1 or KSR2 releasing the inhibitory intramolecular interaction between KSR1 or KSR2 protein kinase and N-terminal domains. This allows KSR1 or KSR2 dimerization with BRAF leading to BRAF activation and phosphorylation of MAP2K1. MAP2K1/MEK1 is also the target of negative feed-back regulation by its substrate kinases, such as MAPK1/ERK2. These phosphorylate MAP2K1/MEK1 on Thr-292, thereby facilitating dephosphorylation of the activating residues Ser-218 and Ser-222. Inhibited by serine/threonine phosphatase 2A. In terms of biological role, dual specificity protein kinase which acts as an essential component of the MAP kinase signal transduction pathway. Binding of extracellular ligands such as growth factors, cytokines and hormones to their cell-surface receptors activates RAS and this initiates RAF1 activation. RAF1 then further activates the dual-specificity protein kinases MAP2K1/MEK1 and MAP2K2/MEK2. Both MAP2K1/MEK1 and MAP2K2/MEK2 function specifically in the MAPK/ERK cascade, and catalyze the concomitant phosphorylation of a threonine and a tyrosine residue in a Thr-Glu-Tyr sequence located in the extracellular signal-regulated kinases MAPK3/ERK1 and MAPK1/ERK2, leading to their activation and further transduction of the signal within the MAPK/ERK cascade. Activates BRAF in a KSR1 or KSR2-dependent manner; by binding to KSR1 or KSR2 releases the inhibitory intramolecular interaction between KSR1 or KSR2 protein kinase and N-terminal domains which promotes KSR1 or KSR2-BRAF dimerization and BRAF activation. Depending on the cellular context, this pathway mediates diverse biological functions such as cell growth, adhesion, survival and differentiation, predominantly through the regulation of transcription, metabolism and cytoskeletal rearrangements. One target of the MAPK/ERK cascade is peroxisome proliferator-activated receptor gamma (PPARG), a nuclear receptor that promotes differentiation and apoptosis. MAP2K1/MEK1 has been shown to export PPARG from the nucleus. The MAPK/ERK cascade is also involved in the regulation of endosomal dynamics, including lysosome processing and endosome cycling through the perinuclear recycling compartment (PNRC), as well as in the fragmentation of the Golgi apparatus during mitosis. This is Dual specificity mitogen-activated protein kinase kinase 1 (MAP2K1) from Oryctolagus cuniculus (Rabbit).